A 281-amino-acid polypeptide reads, in one-letter code: Acidic leucine-rich nuclear phosphoprotein 32-related protein (281 aa).

LRR repeat units lie at residues 29-52 (YESL…EKEL), 56-78 (FKNL…IPSI), 79-103 (ATLN…IVQN), and 105-128 (PNIK…TLKE). The LRRCT domain maps to 140–178 (NPFADNPNYRKELFEFLPNVKIIDCYNKEGMEVLSSDEE). Over residues 197–244 (FKDEDDEDEEFVPNDNEDDDEDDELDDDLEDEDMEDLDKEDLDKEDYD) the composition is skewed to acidic residues. The tract at residues 197–281 (FKDEDDEDEE…DMDLKKTKLE (85 aa)) is disordered. The segment covering 245–266 (IDTKETEGVNKDEKSNKRKQDA) has biased composition (basic and acidic residues).

The protein belongs to the ANP32 family.

In Plasmodium falciparum (isolate 3D7), this protein is Acidic leucine-rich nuclear phosphoprotein 32-related protein.